We begin with the raw amino-acid sequence, 420 residues long: Glutamate dehydrogenase (420 aa).

Lys105 is a catalytic residue. 220–226 contributes to the NAD(+) binding site; it reads GYGNAGY.

The protein belongs to the Glu/Leu/Phe/Val dehydrogenases family. Homohexamer.

It is found in the cytoplasm. It catalyses the reaction L-glutamate + NAD(+) + H2O = 2-oxoglutarate + NH4(+) + NADH + H(+). The catalysed reaction is L-glutamate + NADP(+) + H2O = 2-oxoglutarate + NH4(+) + NADPH + H(+). The chain is Glutamate dehydrogenase (gdhA) from Pyrococcus furiosus (strain ATCC 43587 / DSM 3638 / JCM 8422 / Vc1).